Reading from the N-terminus, the 399-residue chain is Acetate kinase (399 aa).

A Mg(2+)-binding site is contributed by asparagine 10. Residue lysine 17 participates in ATP binding. Arginine 91 is a substrate binding site. The active-site Proton donor/acceptor is the aspartate 148. ATP-binding positions include histidine 208–glycine 212, aspartate 283–arginine 285, and glycine 331–asparagine 335. Mg(2+) is bound at residue glutamate 385.

This sequence belongs to the acetokinase family. Homodimer. It depends on Mg(2+) as a cofactor. The cofactor is Mn(2+).

Its subcellular location is the cytoplasm. The catalysed reaction is acetate + ATP = acetyl phosphate + ADP. Its pathway is metabolic intermediate biosynthesis; acetyl-CoA biosynthesis; acetyl-CoA from acetate: step 1/2. In terms of biological role, catalyzes the formation of acetyl phosphate from acetate and ATP. Can also catalyze the reverse reaction. The polypeptide is Acetate kinase (Shewanella sp. (strain MR-4)).